The sequence spans 488 residues: Ribulose bisphosphate carboxylase large chain (488 aa).

Residues asparagine 127 and threonine 177 each coordinate substrate. Lysine 179 serves as the catalytic Proton acceptor. Lysine 181 contacts substrate. Positions 205, 207, and 208 each coordinate Mg(2+). Residue lysine 205 is modified to N6-carboxylysine. Histidine 297 serves as the catalytic Proton acceptor. 3 residues coordinate substrate: arginine 298, histidine 330, and serine 382.

This sequence belongs to the RuBisCO large chain family. Type I subfamily. Heterohexadecamer of 8 large chains and 8 small chains. Mg(2+) serves as cofactor.

Its subcellular location is the plastid. The protein resides in the chloroplast. The catalysed reaction is 2 (2R)-3-phosphoglycerate + 2 H(+) = D-ribulose 1,5-bisphosphate + CO2 + H2O. It catalyses the reaction D-ribulose 1,5-bisphosphate + O2 = 2-phosphoglycolate + (2R)-3-phosphoglycerate + 2 H(+). In terms of biological role, ruBisCO catalyzes two reactions: the carboxylation of D-ribulose 1,5-bisphosphate, the primary event in carbon dioxide fixation, as well as the oxidative fragmentation of the pentose substrate in the photorespiration process. Both reactions occur simultaneously and in competition at the same active site. The sequence is that of Ribulose bisphosphate carboxylase large chain from Cyanidium caldarium (Red alga).